The following is a 63-amino-acid chain: Bucandin (63 aa).

5 cysteine pairs are disulfide-bonded: C3/C24, C6/C11, C17/C39, C43/C55, and C56/C61.

In terms of tissue distribution, expressed by the venom gland.

It is found in the secreted. Functionally, this toxin is described as enhancing presynaptic acetylcholine release, but neither experimental results, nor references to other sources are available. This Bungarus candidus (Malayan krait) protein is Bucandin.